The sequence spans 108 residues: MDQFECINVADAHQKLQEKEAVLVDIRDPQSFAMGHAVQAFHLTNDTLGAFMRNNDFDTPVMVMCYHGNSSKGAAQYLLQQGYDVVYSIDGGFEAWQRQFPAEVAYGA.

A Rhodanese domain is found at 17 to 105 (QEKEAVLVDI…WQRQFPAEVA (89 aa)). Cys-65 functions as the Cysteine persulfide intermediate in the catalytic mechanism.

Belongs to the GlpE family.

The protein resides in the cytoplasm. The catalysed reaction is thiosulfate + hydrogen cyanide = thiocyanate + sulfite + 2 H(+). It catalyses the reaction thiosulfate + [thioredoxin]-dithiol = [thioredoxin]-disulfide + hydrogen sulfide + sulfite + 2 H(+). In terms of biological role, transferase that catalyzes the transfer of sulfur from thiosulfate to thiophilic acceptors such as cyanide or dithiols. May function in a CysM-independent thiosulfate assimilation pathway by catalyzing the conversion of thiosulfate to sulfite, which can then be used for L-cysteine biosynthesis. The protein is Thiosulfate sulfurtransferase GlpE of Escherichia coli O157:H7.